The sequence spans 494 residues: 3-octaprenyl-4-hydroxybenzoate carboxy-lyase (494 aa).

Asn-172 contributes to the Mn(2+) binding site. Residues 175–177 (IYR), 189–191 (RWL), and 194–195 (RG) contribute to the prenylated FMN site. Position 238 (Glu-238) interacts with Mn(2+). Asp-287 functions as the Proton donor in the catalytic mechanism.

Belongs to the UbiD family. Homohexamer. It depends on prenylated FMN as a cofactor. Requires Mn(2+) as cofactor.

The protein localises to the cell membrane. The enzyme catalyses a 4-hydroxy-3-(all-trans-polyprenyl)benzoate + H(+) = a 2-(all-trans-polyprenyl)phenol + CO2. It participates in cofactor biosynthesis; ubiquinone biosynthesis. In terms of biological role, catalyzes the decarboxylation of 3-octaprenyl-4-hydroxy benzoate to 2-octaprenylphenol, an intermediate step in ubiquinone biosynthesis. The protein is 3-octaprenyl-4-hydroxybenzoate carboxy-lyase of Citrobacter koseri (strain ATCC BAA-895 / CDC 4225-83 / SGSC4696).